The sequence spans 123 residues: Small ribosomal subunit protein eS8 (123 aa).

The segment at Met1–Glu38 is disordered. Over residues Ser7–Glu26 the composition is skewed to basic residues.

In terms of assembly, part of the 30S ribosomal subunit.

This Haloarcula marismortui (strain ATCC 43049 / DSM 3752 / JCM 8966 / VKM B-1809) (Halobacterium marismortui) protein is Small ribosomal subunit protein eS8 (rps8e).